The primary structure comprises 108 residues: UPF0145 protein Patl_2194 (108 aa).

Belongs to the UPF0145 family.

The sequence is that of UPF0145 protein Patl_2194 from Pseudoalteromonas atlantica (strain T6c / ATCC BAA-1087).